The primary structure comprises 357 residues: MKKTVKALAAYQAELPVETVKAKYGLQHLARLSANESVYGPSPKVAQAVRAVSDDILGYYPDGQATELREAVAKLNHVDPQHLVFGAGADELIELLTRVVLEPGSNIIIPNPTFGEYAMHAQIEQSTTKKIPVNVDNGNVDFDAILDAIDDKTAMVWIANPNNPTGVFETTSSIKRFLDKLPANITLVVDEAYYDFVDEPDATVAPLVAEYTNLVVLRTLSKAYGLANLRVGYGIMQDPLYSAMQAVRLPYNLSTYQIAGGTAAVLDQEYLQKNVQRFQVERQKFQDFLTKNKFKFYESQANFIWIKVGETKKVGQKLLEQGFQVNDRLNPEWIRIALGTPEDNAELKLAFLKATNK.

Lysine 222 carries the N6-(pyridoxal phosphate)lysine modification.

The protein belongs to the class-II pyridoxal-phosphate-dependent aminotransferase family. Histidinol-phosphate aminotransferase subfamily. Homodimer. It depends on pyridoxal 5'-phosphate as a cofactor.

It carries out the reaction L-histidinol phosphate + 2-oxoglutarate = 3-(imidazol-4-yl)-2-oxopropyl phosphate + L-glutamate. The protein operates within amino-acid biosynthesis; L-histidine biosynthesis; L-histidine from 5-phospho-alpha-D-ribose 1-diphosphate: step 7/9. The polypeptide is Histidinol-phosphate aminotransferase (Leuconostoc mesenteroides subsp. mesenteroides (strain ATCC 8293 / DSM 20343 / BCRC 11652 / CCM 1803 / JCM 6124 / NCDO 523 / NBRC 100496 / NCIMB 8023 / NCTC 12954 / NRRL B-1118 / 37Y)).